The following is a 50-amino-acid chain: Insulin (50 aa).

Disulfide bonds link Cys7–Cys36, Cys19–Cys49, and Cys35–Cys40.

The protein belongs to the insulin family. In terms of assembly, heterodimer of a B chain and an A chain linked by two disulfide bonds.

The protein localises to the secreted. Functionally, insulin decreases blood glucose concentration. It increases cell permeability to monosaccharides, amino acids and fatty acids. It accelerates glycolysis, the pentose phosphate cycle, and glycogen synthesis in liver. In Oncorhynchus gorbuscha (Pink salmon), this protein is Insulin (ins).